A 717-amino-acid polypeptide reads, in one-letter code: Polyribonucleotide nucleotidyltransferase (717 aa).

Residues Asp-496 and Asp-502 each contribute to the Mg(2+) site. The KH domain occupies 563–622 (PRLLSFKIDPEMIGLVIGPGGKTIKGITEETGVKIDIDDDGTVTIAAADGEKAKQACNII). The S1 motif domain maps to 632-700 (GDVYVGRVTR…SKGRVNLTRL (69 aa)).

The protein belongs to the polyribonucleotide nucleotidyltransferase family. Mg(2+) is required as a cofactor.

The protein localises to the cytoplasm. It carries out the reaction RNA(n+1) + phosphate = RNA(n) + a ribonucleoside 5'-diphosphate. Its function is as follows. Involved in mRNA degradation. Catalyzes the phosphorolysis of single-stranded polyribonucleotides processively in the 3'- to 5'-direction. The polypeptide is Polyribonucleotide nucleotidyltransferase (Trichodesmium erythraeum (strain IMS101)).